Consider the following 409-residue polypeptide: Nucleoprotein (409 aa).

Disordered stretches follow at residues 1–84 (MASG…KGGR) and 121–194 (ADTK…DSGD). Over residues 15–31 (PVIKLGGPKPPKVGSSG) the composition is skewed to low complexity. An RNA-binding region spans residues 29-160 (SSGNASWFQA…GNFRWDFIPL (132 aa)). The 126-residue stretch at 31 to 156 (GNASWFQAIK…GGPDGNFRWD (126 aa)) folds into the CoV N NTD domain. The segment covering 70–84 (YWRRQARFKPGKGGR) has biased composition (basic residues). Low complexity predominate over residues 162 to 179 (RGRSGRSTAASSAAASRA). The span at 180-192 (PSREGSRGRRSDS) shows a compositional bias: basic and acidic residues. Phosphoserine; by host occurs at positions 190 and 192. The CoV N CTD domain occupies 215 to 331 (TKAKADEMAH…QCVDGVGTRP (117 aa)). The interval 226–333 (RYCKRTIPPN…VDGVGTRPKD (108 aa)) is dimerization. 2 disulfides stabilise this stretch: C281/C308 and C320/C323. Residues 327–396 (VGTRPKDDEP…QLEFYDEPKV (70 aa)) form a disordered region. A compositionally biased stretch (basic residues) spans 358 to 367 (QRPKKEKKLK). Residues 368-384 (KQDDEADKALTSDEERN) show a composition bias toward basic and acidic residues. A Phosphothreonine; by host modification is found at T378. The residue at position 379 (S379) is a Phosphoserine; by host.

This sequence belongs to the gammacoronavirus nucleocapsid protein family. Homooligomer. Both monomeric and oligomeric forms interact with RNA. Interacts with protein M. Interacts with NSP3; this interaction serves to tether the genome to the newly translated replicase-transcriptase complex at a very early stage of infection. Post-translationally, ADP-ribosylated. The ADP-ribosylation is retained in the virion during infection. Phosphorylated on serine and threonine residues.

The protein localises to the virion. Its subcellular location is the host endoplasmic reticulum-Golgi intermediate compartment. It localises to the host Golgi apparatus. In terms of biological role, packages the positive strand viral genome RNA into a helical ribonucleocapsid (RNP) and plays a fundamental role during virion assembly through its interactions with the viral genome and membrane protein M. Plays an important role in enhancing the efficiency of subgenomic viral RNA transcription as well as viral replication. This is Nucleoprotein from Gallus gallus (Chicken).